An 88-amino-acid chain; its full sequence is Large ribosomal subunit protein bL31B (88 aa).

The protein belongs to the bacterial ribosomal protein bL31 family. Type B subfamily. Part of the 50S ribosomal subunit.

This Nocardia farcinica (strain IFM 10152) protein is Large ribosomal subunit protein bL31B.